A 236-amino-acid chain; its full sequence is Cutinase (236 aa).

An N-terminal signal peptide occupies residues 1-20 (MSLTLFSFLSLVSILCIVTA). A disulfide bridge links cysteine 66 with cysteine 143. Residue serine 154 is the Nucleophile of the active site. Cysteine 202 and cysteine 209 are disulfide-bonded. The active site involves aspartate 206. Histidine 218 serves as the catalytic Proton donor/acceptor.

It belongs to the cutinase family. In terms of processing, the 2 disulfide bonds play a critical role in holding the catalytic residues in juxta-position; reduction of the disulfide bridges results in the complete inactivation of the enzyme.

It localises to the secreted. It carries out the reaction cutin + H2O = cutin monomers.. Catalyzes the hydrolysis of complex carboxylic polyesters found in the cell wall of plants. Degrades cutin, a macromolecule that forms the structure of the plant cuticle. Allows pathogenic fungi to penetrate through the cuticular barrier into the host plant during the initial stage of fungal infection. This Blumeria hordei (Barley powdery mildew) protein is Cutinase (CUT1).